We begin with the raw amino-acid sequence, 432 residues long: MSYSRSMYSSSSVVGGSPYRSLSSAPRFAPGSSAASVHAGPGGSGARISVSRVSSVGSGFGGGFSGGFSGVSNVSLMGGAQNEKETMQDLNDRLASYLERVRSLETANKELEVQIRQHTEKKGPAKDWSPYYKAIEDLKKQVFDSTVDNSQLVLQIDNARLAADDFRVKYEAELAIRMSVETDIGGLRKLIDDTNISRLNLENEIESLKEELIFLKKNHQDDVNELQAQIARSAVTVEVDAPKSQDLGKIMAELRAQYDGLAQKNREDVEKWYQSKVEEHTMQVNIDTQELQTSKNSVTELRRTMQSLEIELESLRNQKASLEGTLHDTEARYAMELEMLGGTAMARESELVQVRSDCQRQQQEYQALLNTKMKLEAEIHTYRRLLEGDSFDLQDAVPTVTTQTVKKVITTTQRIVDGKVVAESNDTEVLKA.

A compositionally biased stretch (low complexity) spans 1 to 21; the sequence is MSYSRSMYSSSSVVGGSPYRS. The disordered stretch occupies residues 1 to 44; it reads MSYSRSMYSSSSVVGGSPYRSLSSAPRFAPGSSAASVHAGPGGS. A head region spans residues 2 to 82; that stretch reads SYSRSMYSSS…NVSLMGGAQN (81 aa). A coil 1A region spans residues 83–118; it reads EKETMQDLNDRLASYLERVRSLETANKELEVQIRQH. An IF rod domain is found at 83–393; that stretch reads EKETMQDLND…RLLEGDSFDL (311 aa). Positions 119–134 are linker 1; that stretch reads TEKKGPAKDWSPYYKA. The segment at 135 to 226 is coil 1B; that stretch reads IEDLKKQVFD…KNHQDDVNEL (92 aa). The linker 12 stretch occupies residues 227 to 250; it reads QAQIARSAVTVEVDAPKSQDLGKI. The tract at residues 251–388 is coil 2; it reads MAELRAQYDG…IHTYRRLLEG (138 aa). A tail region spans residues 389–432; it reads DSFDLQDAVPTVTTQTVKKVITTTQRIVDGKVVAESNDTEVLKA.

Belongs to the intermediate filament family. As to quaternary structure, heterotetramer of two type I and two type II keratins. Keratin-18 associates with keratin-8. Post-translationally, phosphorylated. Proteolytically cleaved by caspases during epithelial cell apoptosis.

In terms of biological role, when phosphorylated, plays a role in filament reorganization. The polypeptide is Keratin, type I cytoskeletal 18-B (krt18-b) (Xenopus laevis (African clawed frog)).